A 294-amino-acid polypeptide reads, in one-letter code: Large ribosomal subunit protein uL2c (294 aa).

The interval 224–249 (VMNPVDHPHGGGGEGKSPIGRSRPVT) is disordered.

It belongs to the universal ribosomal protein uL2 family. Part of the 50S ribosomal subunit.

The protein localises to the plastid. The protein resides in the chloroplast. The sequence is that of Large ribosomal subunit protein uL2c (rpl2) from Porphyra purpurea (Red seaweed).